A 180-amino-acid polypeptide reads, in one-letter code: Trichosurin (180 aa).

Residues 1–15 (MKLLLLSMGLALVCG) form the signal peptide. Residues Asn-67 and Asn-148 are each glycosylated (N-linked (GlcNAc...) asparagine). Cysteines 87 and 180 form a disulfide.

It belongs to the calycin superfamily. Lipocalin family. As to quaternary structure, homodimer. Milk.

Its subcellular location is the secreted. The chain is Trichosurin from Trichosurus vulpecula (Brush-tailed possum).